Reading from the N-terminus, the 591-residue chain is Beta-fructofuranosidase, insoluble isoenzyme CWINV4 (591 aa).

The signal sequence occupies residues 1 to 22 (MAISNVISVLLLLLVLINLSNQ). Residues 61–64 (WIND), Q80, W88, and 123–124 (WS) contribute to the substrate site. D64 is a catalytic residue. N-linked (GlcNAc...) asparagine glycans are attached at residues N145 and N182. Substrate is bound by residues 187–188 (RD), E242, and D276. 3 N-linked (GlcNAc...) asparagine glycosylation sites follow: N336, N472, and N565. C436 and C484 are joined by a disulfide.

This sequence belongs to the glycosyl hydrolase 32 family. In terms of tissue distribution, expressed in flowers, and seeds, and, to a lower extent, in seedlings.

It is found in the secreted. The protein resides in the extracellular space. Its subcellular location is the apoplast. It localises to the cell wall. It carries out the reaction Hydrolysis of terminal non-reducing beta-D-fructofuranoside residues in beta-D-fructofuranosides.. The protein is Beta-fructofuranosidase, insoluble isoenzyme CWINV4 (CWINV4) of Arabidopsis thaliana (Mouse-ear cress).